A 154-amino-acid chain; its full sequence is Deoxyuridine 5'-triphosphate nucleotidohydrolase (154 aa).

Residues Arg-74–Gly-76, Asn-87, Thr-91–Asp-93, and Lys-101 each bind substrate.

It belongs to the dUTPase family. Mg(2+) serves as cofactor.

It carries out the reaction dUTP + H2O = dUMP + diphosphate + H(+). Its pathway is pyrimidine metabolism; dUMP biosynthesis; dUMP from dCTP (dUTP route): step 2/2. Its function is as follows. This enzyme is involved in nucleotide metabolism: it produces dUMP, the immediate precursor of thymidine nucleotides and it decreases the intracellular concentration of dUTP so that uracil cannot be incorporated into DNA. The sequence is that of Deoxyuridine 5'-triphosphate nucleotidohydrolase from Cytophaga hutchinsonii (strain ATCC 33406 / DSM 1761 / CIP 103989 / NBRC 15051 / NCIMB 9469 / D465).